Here is a 210-residue protein sequence, read N- to C-terminus: Orotate phosphoribosyltransferase (210 aa).

Residues R96, K100, H102, and 122 to 130 (DDLISTGGS) contribute to the 5-phospho-alpha-D-ribose 1-diphosphate site. Orotate is bound at residue S126.

This sequence belongs to the purine/pyrimidine phosphoribosyltransferase family. PyrE subfamily. As to quaternary structure, homodimer. The cofactor is Mg(2+).

The catalysed reaction is orotidine 5'-phosphate + diphosphate = orotate + 5-phospho-alpha-D-ribose 1-diphosphate. It functions in the pathway pyrimidine metabolism; UMP biosynthesis via de novo pathway; UMP from orotate: step 1/2. Its function is as follows. Catalyzes the transfer of a ribosyl phosphate group from 5-phosphoribose 1-diphosphate to orotate, leading to the formation of orotidine monophosphate (OMP). This Levilactobacillus brevis (strain ATCC 367 / BCRC 12310 / CIP 105137 / JCM 1170 / LMG 11437 / NCIMB 947 / NCTC 947) (Lactobacillus brevis) protein is Orotate phosphoribosyltransferase.